A 271-amino-acid chain; its full sequence is Formamidopyrimidine-DNA glycosylase (271 aa).

The active-site Schiff-base intermediate with DNA is proline 2. Catalysis depends on glutamate 3, which acts as the Proton donor. Lysine 58 serves as the catalytic Proton donor; for beta-elimination activity. The DNA site is built by histidine 91, arginine 110, and arginine 152. An FPG-type zinc finger spans residues 237-271; that stretch reads RVYGRTGLACMACETPVKQIVQGNRSTYYCPACQR. Arginine 261 functions as the Proton donor; for delta-elimination activity in the catalytic mechanism.

It belongs to the FPG family. In terms of assembly, monomer. It depends on Zn(2+) as a cofactor.

The catalysed reaction is Hydrolysis of DNA containing ring-opened 7-methylguanine residues, releasing 2,6-diamino-4-hydroxy-5-(N-methyl)formamidopyrimidine.. The enzyme catalyses 2'-deoxyribonucleotide-(2'-deoxyribose 5'-phosphate)-2'-deoxyribonucleotide-DNA = a 3'-end 2'-deoxyribonucleotide-(2,3-dehydro-2,3-deoxyribose 5'-phosphate)-DNA + a 5'-end 5'-phospho-2'-deoxyribonucleoside-DNA + H(+). Involved in base excision repair of DNA damaged by oxidation or by mutagenic agents. Acts as a DNA glycosylase that recognizes and removes damaged bases. Has a preference for oxidized purines, such as 7,8-dihydro-8-oxoguanine (8-oxoG). Has AP (apurinic/apyrimidinic) lyase activity and introduces nicks in the DNA strand. Cleaves the DNA backbone by beta-delta elimination to generate a single-strand break at the site of the removed base with both 3'- and 5'-phosphates. The protein is Formamidopyrimidine-DNA glycosylase of Thioalkalivibrio sulfidiphilus (strain HL-EbGR7).